The following is a 525-amino-acid chain: Chromosomal replication initiator protein DnaA (525 aa).

The segment at 1-71 (MNDFWQHCSA…ADLAREFWNT (71 aa)) is domain I, interacts with DnaA modulators. The segment at 71-188 (TPIEVQFVLD…GEADSMYERS (118 aa)) is domain II. Residues 160-182 (AAAGRRTWRPGPGAAPANGGEAD) form a disordered region. A compositionally biased stretch (low complexity) spans 169 to 181 (PGPGAAPANGGEA). A domain III, AAA+ region region spans residues 189–405 (KLNPVLTFDN…GALRKILAYS (217 aa)). The ATP site is built by glycine 233, glycine 235, lysine 236, and threonine 237. A domain IV, binds dsDNA region spans residues 406–525 (KFHGREISIE…LHVLEQTLKG (120 aa)).

It belongs to the DnaA family. As to quaternary structure, oligomerizes as a right-handed, spiral filament on DNA at oriC.

Its subcellular location is the cytoplasm. Plays an essential role in the initiation and regulation of chromosomal replication. ATP-DnaA binds to the origin of replication (oriC) to initiate formation of the DNA replication initiation complex once per cell cycle. Binds the DnaA box (a 9 base pair repeat at the origin) and separates the double-stranded (ds)DNA. Forms a right-handed helical filament on oriC DNA; dsDNA binds to the exterior of the filament while single-stranded (ss)DNA is stabiized in the filament's interior. The ATP-DnaA-oriC complex binds and stabilizes one strand of the AT-rich DNA unwinding element (DUE), permitting loading of DNA polymerase. After initiation quickly degrades to an ADP-DnaA complex that is not apt for DNA replication. Binds acidic phospholipids. The protein is Chromosomal replication initiator protein DnaA of Burkholderia cenocepacia (strain ATCC BAA-245 / DSM 16553 / LMG 16656 / NCTC 13227 / J2315 / CF5610) (Burkholderia cepacia (strain J2315)).